The chain runs to 881 residues: DNA mismatch repair protein MutS (881 aa).

Position 632–639 (glycine 632–serine 639) interacts with ATP.

The protein belongs to the DNA mismatch repair MutS family.

Its function is as follows. This protein is involved in the repair of mismatches in DNA. It is possible that it carries out the mismatch recognition step. This protein has a weak ATPase activity. The protein is DNA mismatch repair protein MutS of Chelativorans sp. (strain BNC1).